A 407-amino-acid polypeptide reads, in one-letter code: Argininosuccinate synthase (407 aa).

Residues 13 to 21 (AYSGGLDTS) and Ala-40 each bind ATP. Tyr-91 and Ser-96 together coordinate L-citrulline. Gly-121 is an ATP binding site. L-aspartate is bound by residues Thr-123, Asn-127, and Asp-128. An L-citrulline-binding site is contributed by Asn-127. L-citrulline contacts are provided by Arg-131, Ser-182, Ser-191, Glu-267, and Tyr-279.

This sequence belongs to the argininosuccinate synthase family. Type 1 subfamily. As to quaternary structure, homotetramer.

The protein localises to the cytoplasm. The enzyme catalyses L-citrulline + L-aspartate + ATP = 2-(N(omega)-L-arginino)succinate + AMP + diphosphate + H(+). It participates in amino-acid biosynthesis; L-arginine biosynthesis; L-arginine from L-ornithine and carbamoyl phosphate: step 2/3. This Agrobacterium fabrum (strain C58 / ATCC 33970) (Agrobacterium tumefaciens (strain C58)) protein is Argininosuccinate synthase.